The following is a 207-amino-acid chain: ATP-dependent Clp protease proteolytic subunit (207 aa).

Serine 111 serves as the catalytic Nucleophile. The active site involves histidine 136.

It belongs to the peptidase S14 family. Fourteen ClpP subunits assemble into 2 heptameric rings which stack back to back to give a disk-like structure with a central cavity, resembling the structure of eukaryotic proteasomes.

It localises to the cytoplasm. The catalysed reaction is Hydrolysis of proteins to small peptides in the presence of ATP and magnesium. alpha-casein is the usual test substrate. In the absence of ATP, only oligopeptides shorter than five residues are hydrolyzed (such as succinyl-Leu-Tyr-|-NHMec, and Leu-Tyr-Leu-|-Tyr-Trp, in which cleavage of the -Tyr-|-Leu- and -Tyr-|-Trp bonds also occurs).. In terms of biological role, cleaves peptides in various proteins in a process that requires ATP hydrolysis. Has a chymotrypsin-like activity. Plays a major role in the degradation of misfolded proteins. This chain is ATP-dependent Clp protease proteolytic subunit, found in Photorhabdus laumondii subsp. laumondii (strain DSM 15139 / CIP 105565 / TT01) (Photorhabdus luminescens subsp. laumondii).